The sequence spans 481 residues: UDP-glycosyltransferase 88F3 (481 aa).

UDP-alpha-D-glucose contacts are provided by residues serine 288, 357–358 (WA), 375–383 (HCGWNSVLE), and 397–400 (YAEQ).

The protein belongs to the UDP-glycosyltransferase family.

Glycosyltransferase that may possess chalcone and dihydrochalcone 2'-O-glucosyltransferase activity. In Pyrus communis (Pear), this protein is UDP-glycosyltransferase 88F3.